Consider the following 1396-residue polypeptide: Major capsid protein (1396 aa).

Belongs to the herpesviridae major capsid protein family. In terms of assembly, homomultimer. Makes the hexons and eleven out of twelve pentons. Interacts with triplex proteins 1/TRX1 and 2/TRX2; adjacent capsomers are linked together in groups of three by triplexes, heterotrimeric complexes composed of one molecule of TRX1 and two molecules of TRX2. Interacts with scaffold protein; this interaction allows efficient MCP transport to the host nucleus. Interacts with capsid vertex component 2/CVC2. Interacts with the small capsomere-interacting protein/SCP.

It localises to the virion. The protein resides in the host nucleus. In terms of biological role, self-assembles to form an icosahedral capsid with a T=16 symmetry, about 200 nm in diameter, and consisting of 150 hexons and 12 pentons (total of 162 capsomers). Hexons form the edges and faces of the capsid and are each composed of six MCP molecules. In contrast, one penton is found at each of the 12 vertices. Eleven of the pentons are MCP pentamers, while the last vertex is occupied by the portal complex. The capsid is surrounded by a layer of proteinaceous material designated the tegument which, in turn, is enclosed in an envelope of host cell-derived lipids containing virus-encoded glycoproteins. This Varicella-zoster virus (strain Dumas) (HHV-3) protein is Major capsid protein.